The primary structure comprises 51 residues: Insulin (51 aa).

Intrachain disulfides connect cysteine 7-cysteine 37, cysteine 19-cysteine 50, and cysteine 36-cysteine 41.

This sequence belongs to the insulin family. Heterodimer of a B chain and an A chain linked by two disulfide bonds.

It localises to the secreted. In terms of biological role, insulin decreases blood glucose concentration. It increases cell permeability to monosaccharides, amino acids and fatty acids. It accelerates glycolysis, the pentose phosphate cycle, and glycogen synthesis in liver. This is Insulin (INS) from Ptyas dhumnades (Big-eyed ratsnake).